A 347-amino-acid chain; its full sequence is Isopentenyl-diphosphate delta-isomerase (347 aa).

The tract at residues 1–31 is disordered; the sequence is MDESNSQFEKRKRDHIRIALDPRSQTDGQNG. Positions 8–20 are enriched in basic and acidic residues; the sequence is FEKRKRDHIRIAL. 11–12 provides a ligand contact to substrate; it reads RK. FMN-binding positions include S72, 73-75, S103, and N132; that span reads SMT. Substrate is bound at residue 103 to 105; it reads SQR. Q166 is a substrate binding site. A Mg(2+)-binding site is contributed by E167. FMN is bound by residues K198, S223, T228, 279–281, and 300–301; these read GVR and AK.

This sequence belongs to the IPP isomerase type 2 family. Homooctamer. Dimer of tetramers. The cofactor is FMN. Requires NADPH as cofactor. It depends on Mg(2+) as a cofactor.

The protein localises to the cytoplasm. It catalyses the reaction isopentenyl diphosphate = dimethylallyl diphosphate. Functionally, involved in the biosynthesis of isoprenoids. Catalyzes the 1,3-allylic rearrangement of the homoallylic substrate isopentenyl (IPP) to its allylic isomer, dimethylallyl diphosphate (DMAPP). The sequence is that of Isopentenyl-diphosphate delta-isomerase from Bdellovibrio bacteriovorus (strain ATCC 15356 / DSM 50701 / NCIMB 9529 / HD100).